We begin with the raw amino-acid sequence, 469 residues long: Ribulose bisphosphate carboxylase large chain (469 aa).

Lys8 bears the N6,N6,N6-trimethyllysine mark. Positions 117 and 167 each coordinate substrate. The active-site Proton acceptor is the Lys169. Lys171 lines the substrate pocket. Residues Lys195, Asp197, and Glu198 each coordinate Mg(2+). Position 195 is an N6-carboxylysine (Lys195). His288 functions as the Proton acceptor in the catalytic mechanism. Residues Arg289, His321, and Ser373 each contribute to the substrate site.

The protein belongs to the RuBisCO large chain family. Type I subfamily. In terms of assembly, heterohexadecamer of 8 large chains and 8 small chains; disulfide-linked. The disulfide link is formed within the large subunit homodimers. Mg(2+) serves as cofactor. Post-translationally, the disulfide bond which can form in the large chain dimeric partners within the hexadecamer appears to be associated with oxidative stress and protein turnover.

The protein localises to the plastid. It is found in the chloroplast. It carries out the reaction 2 (2R)-3-phosphoglycerate + 2 H(+) = D-ribulose 1,5-bisphosphate + CO2 + H2O. The enzyme catalyses D-ribulose 1,5-bisphosphate + O2 = 2-phosphoglycolate + (2R)-3-phosphoglycerate + 2 H(+). Its function is as follows. RuBisCO catalyzes two reactions: the carboxylation of D-ribulose 1,5-bisphosphate, the primary event in carbon dioxide fixation, as well as the oxidative fragmentation of the pentose substrate in the photorespiration process. Both reactions occur simultaneously and in competition at the same active site. In Coleonema pulchellum (Confetti bush), this protein is Ribulose bisphosphate carboxylase large chain.